The primary structure comprises 265 residues: Small ribosomal subunit protein uS2 (265 aa).

The segment at 231-265 is disordered; that stretch reads VEEEYEDYEGAEDDYEYDETEYTDSVIPDDEEEAE.

This sequence belongs to the universal ribosomal protein uS2 family.

The polypeptide is Small ribosomal subunit protein uS2 (Trichormus variabilis (strain ATCC 29413 / PCC 7937) (Anabaena variabilis)).